A 132-amino-acid chain; its full sequence is Small ribosomal subunit protein uS8 (132 aa).

Belongs to the universal ribosomal protein uS8 family. Part of the 30S ribosomal subunit. Contacts proteins S5 and S12.

Its function is as follows. One of the primary rRNA binding proteins, it binds directly to 16S rRNA central domain where it helps coordinate assembly of the platform of the 30S subunit. The chain is Small ribosomal subunit protein uS8 from Thermoanaerobacter pseudethanolicus (strain ATCC 33223 / 39E) (Clostridium thermohydrosulfuricum).